Consider the following 148-residue polypeptide: UPF0756 membrane protein ETA_17460 (148 aa).

A run of 4 helical transmembrane segments spans residues 14–34 (ALSYFSHNITVTIALLVLIVI), 51–71 (MTVGIIILTIGVMAPIASGTI), 80–100 (FLHWKSLTAIAIGIFVSWLGG), and 112–132 (VVGGLLIGTIIGVSLFRGVPV).

The protein belongs to the UPF0756 family.

It localises to the cell membrane. This Erwinia tasmaniensis (strain DSM 17950 / CFBP 7177 / CIP 109463 / NCPPB 4357 / Et1/99) protein is UPF0756 membrane protein ETA_17460.